The chain runs to 232 residues: Protein DOG1-like 4 (232 aa).

The region spanning 9–229 (EEKFLEFYES…RRWGNRRHYV (221 aa)) is the DOG1 domain.

This chain is Protein DOG1-like 4, found in Arabidopsis thaliana (Mouse-ear cress).